Reading from the N-terminus, the 93-residue chain is Small ribosomal subunit protein bS18 (93 aa).

It belongs to the bacterial ribosomal protein bS18 family. Part of the 30S ribosomal subunit. Forms a tight heterodimer with protein bS6.

Its function is as follows. Binds as a heterodimer with protein bS6 to the central domain of the 16S rRNA, where it helps stabilize the platform of the 30S subunit. The protein is Small ribosomal subunit protein bS18 of Paracidovorax citrulli (strain AAC00-1) (Acidovorax citrulli).